We begin with the raw amino-acid sequence, 253 residues long: Carboxy-S-adenosyl-L-methionine synthase (253 aa).

S-adenosyl-L-methionine-binding positions include Tyr-49, 74–76, 98–99, and Asn-141; these read GCS and DN.

This sequence belongs to the class I-like SAM-binding methyltransferase superfamily. Cx-SAM synthase family.

The catalysed reaction is prephenate + S-adenosyl-L-methionine = carboxy-S-adenosyl-L-methionine + 3-phenylpyruvate + H2O. In terms of biological role, catalyzes the conversion of S-adenosyl-L-methionine (SAM) to carboxy-S-adenosyl-L-methionine (Cx-SAM). The sequence is that of Carboxy-S-adenosyl-L-methionine synthase from Trichodesmium erythraeum (strain IMS101).